A 340-amino-acid polypeptide reads, in one-letter code: Biotin synthase (340 aa).

A Radical SAM core domain is found at 45–272; that stretch reads NAVQVSTLLS…ASYVRLSAGR (228 aa). Cys-60, Cys-64, and Cys-67 together coordinate [4Fe-4S] cluster. Residues Cys-104, Cys-135, Cys-195, and Arg-267 each contribute to the [2Fe-2S] cluster site.

This sequence belongs to the radical SAM superfamily. Biotin synthase family. Homodimer. [4Fe-4S] cluster serves as cofactor. The cofactor is [2Fe-2S] cluster.

The enzyme catalyses (4R,5S)-dethiobiotin + (sulfur carrier)-SH + 2 reduced [2Fe-2S]-[ferredoxin] + 2 S-adenosyl-L-methionine = (sulfur carrier)-H + biotin + 2 5'-deoxyadenosine + 2 L-methionine + 2 oxidized [2Fe-2S]-[ferredoxin]. The protein operates within cofactor biosynthesis; biotin biosynthesis; biotin from 7,8-diaminononanoate: step 2/2. In terms of biological role, catalyzes the conversion of dethiobiotin (DTB) to biotin by the insertion of a sulfur atom into dethiobiotin via a radical-based mechanism. The protein is Biotin synthase of Thioalkalivibrio sulfidiphilus (strain HL-EbGR7).